A 60-amino-acid chain; its full sequence is Small ribosomal subunit protein bS21 (60 aa).

A disordered region spans residues 41-60 (PEEKRKRKAIARRRQRSRRR). The segment covering 45–60 (RKRKAIARRRQRSRRR) has biased composition (basic residues).

Belongs to the bacterial ribosomal protein bS21 family.

This chain is Small ribosomal subunit protein bS21, found in Gloeothece citriformis (strain PCC 7424) (Cyanothece sp. (strain PCC 7424)).